The sequence spans 278 residues: MAAAAGGGAAPFVWKTYRMVEDPGTDGVIGWGKGNNSFVVADPFVFSQTLLPAHFKHNNFSSFVRQLNTYGFRKVDPDRWEFAHASFLRGQTHLLRNIVRRGSAAAGGGGGGGGGKRRDASADGGGGGGDEDMTMVATEVVRLKQEQRTIDDRVAAMWRRVQETERRPKQMLAFLLKVVGDRDKLHRLVGGGGNGNGAATAAAADNGFADAARAGCGEKRARLLLDGDNTGAFGPDAVDFAGFYTGADMFPDVAVDAAAAAAGGSAGCSFAFGVDSGY.

Gly residues predominate over residues 105–114; the sequence is AAGGGGGGGG. The interval 105-132 is disordered; that stretch reads AAGGGGGGGGGKRRDASADGGGGGGDED. Residues 143–179 form a hydrophobic repeat HR-A/B region; sequence LKQEQRTIDDRVAAMWRRVQETERRPKQMLAFLLKVV. The Nuclear localization signal motif lies at 219–222; the sequence is KRAR.

The protein belongs to the HSF family. Class C subfamily. In terms of assembly, homotrimer. Post-translationally, exhibits temperature-dependent phosphorylation.

It localises to the nucleus. In terms of biological role, transcriptional regulator that specifically binds DNA of heat shock promoter elements (HSE). The sequence is that of Heat stress transcription factor C-2b (HSFC2B) from Oryza sativa subsp. japonica (Rice).